Here is a 511-residue protein sequence, read N- to C-terminus: Phosphoenolpyruvate carboxylase (511 aa).

It belongs to the PEPCase type 2 family. As to quaternary structure, homotetramer. Mg(2+) is required as a cofactor.

It carries out the reaction oxaloacetate + phosphate = phosphoenolpyruvate + hydrogencarbonate. Functionally, catalyzes the irreversible beta-carboxylation of phosphoenolpyruvate (PEP) to form oxaloacetate (OAA), a four-carbon dicarboxylic acid source for the tricarboxylic acid cycle. The protein is Phosphoenolpyruvate carboxylase of Saccharolobus islandicus (strain Y.G.57.14 / Yellowstone #1) (Sulfolobus islandicus).